The primary structure comprises 173 residues: Bacterial deubiquitinase-like protein BilC (173 aa).

3 residues coordinate Zn(2+): H103, H105, and D115.

Belongs to the M67B family. It depends on Zn(2+) as a cofactor.

In terms of biological role, component of the Bil (bacterial ISG15-like) antiviral defense system, composed of BilA, BilB, BilC and BilD. The Bil system specifically conjugates a ubiquitin-like moiety (bilA) to the bacteriophage central tail fiber (CTF, or tip attachment protein J) via reactions involving E1 (bilD) and E2 (bilB). Modifies CTF of phage SECphi27 and SECphi4, which probably interferes with assembly of the phage tail. Also modifies T5 baseplate hub protein pb3 (gene D16), but not gp27 of phage T6 (Bil defends against T6). BilC is a probable metalloprotease that may cleave non-specifically conjugated targets. Bil-encoding bacteria produce mostly defective phage SECphi27, many of which have phage assembly defects, including no tails. SECphi27 phage progeny produced in E.coli with the Bil system inject less DNA into naive host cells, maybe because the phage are less able to adsorb and inject their DNA into host cells. Functionally, expression of the Bil system in E.coli (strain MG1655) confers about 100-fold resistance to phage SECphi27, SECphi18, SECphi6, SECphi4 and T5, but not to SECphi17. When cells expressing the Bil system are infected by phage SECphi27 at low multiplicity of infection (0.03 MOI) the culture survives, at 3.0 MOI the culture collapses at the same time as cells without the Bil system. Cleaves a ubiquitin-GFP (Ubl-GFP) fusion protein in vivo. This Collimonas sp. (strain OK412) protein is Bacterial deubiquitinase-like protein BilC.